Consider the following 218-residue polypeptide: Protein OPG170 (218 aa).

A signal peptide spans 1-16 (MYSLVFVILMCIPFSF). A glycan (N-linked (GlcNAc...) asparagine; by host) is linked at Asn70.

The protein belongs to the orthopoxvirus OPG170 family.

The protein resides in the secreted. Its function is as follows. May interact with several cellular chemokines to interfere with chemokine-glycosaminoglycan (GAG) interactions at the cell surface to alter chemotaxis of nearby responsive cells. In Homo sapiens (Human), this protein is Protein OPG170 (OPG170).